The following is a 533-amino-acid chain: MVLQKLPLMSIGLLWLLIIVGPLVNADGPVCPPKPSDKLSRAHFPKGFLFGTATAAYQVEGAVNETCRGPSVWDIYCKKYPEKCNGDNGTQAVDFFYRYKEDIQLMKNLNTDSFRLSISWTRIFPHGREENGVSKSGVQFYHDLIDELKRNGIIPFVTVFHWDTPQTLENEYGGFLSAHIVKDFREYAEFVFKEYGGKVKHWITFNEPWVFAHAGYDVGKKAPGRCSPYAKDETVKGDCLGGRSGYEAYLVSHNLLNAHAEAVEAFRQCEKCKGGKIGIAHSPAWFEPHDFKDEQSGATIDRALDFIMGWHLDTTMFGDYPQTMKDIVGHRLPKFTTEQIAKLKNSADFVGINYYTSTFSKHLEKPNHAEPKFKQDSLVEWKNKNVNNITIGSKPETGPLPVYSTGFRKVLKYVKDKYANPEIIIMENGYGENLKENDSVENGTADYNRESYLKKHLWSMHKAICEDKVNVTGYFVWSLMDNFEWQDGFKNRFGLYYIDYKNNLTRHEKVSGKYYREFLSEGVRPSAIKKDEL.

The first 26 residues, 1-26 (MVLQKLPLMSIGLLWLLIIVGPLVNA), serve as a signal peptide directing secretion. Position 58 (Gln-58) interacts with a beta-D-glucoside. N-linked (GlcNAc...) asparagine glycans are attached at residues Asn-64 and Asn-88. Residues His-161 and 206–207 (NE) contribute to the a beta-D-glucoside site. Glu-207 serves as the catalytic Proton donor. A disulfide bridge links Cys-226 with Cys-239. Tyr-355 contacts a beta-D-glucoside. The N-linked (GlcNAc...) asparagine glycan is linked to Asn-388. An a beta-D-glucoside-binding site is contributed by Glu-427. Glu-427 acts as the Nucleophile in catalysis. Residues Asn-437, Asn-442, and Asn-470 are each glycosylated (N-linked (GlcNAc...) asparagine). Residues Trp-477, 484 to 485 (EW), and Phe-493 contribute to the a beta-D-glucoside site. Residue Asn-503 is glycosylated (N-linked (GlcNAc...) asparagine). Positions 530 to 533 (KDEL) match the Prevents secretion from ER motif.

This sequence belongs to the glycosyl hydrolase 1 family.

It is found in the endoplasmic reticulum lumen. It carries out the reaction Hydrolysis of terminal, non-reducing beta-D-glucosyl residues with release of beta-D-glucose.. The chain is Beta-glucosidase 24 from Arabidopsis thaliana (Mouse-ear cress).